A 103-amino-acid chain; its full sequence is Large ribosomal subunit protein bL21 (103 aa).

This sequence belongs to the bacterial ribosomal protein bL21 family. As to quaternary structure, part of the 50S ribosomal subunit. Contacts protein L20.

This protein binds to 23S rRNA in the presence of protein L20. In Leptothrix cholodnii (strain ATCC 51168 / LMG 8142 / SP-6) (Leptothrix discophora (strain SP-6)), this protein is Large ribosomal subunit protein bL21.